The sequence spans 85 residues: Cell division topological specificity factor (85 aa).

Belongs to the MinE family.

Prevents the cell division inhibition by proteins MinC and MinD at internal division sites while permitting inhibition at polar sites. This ensures cell division at the proper site by restricting the formation of a division septum at the midpoint of the long axis of the cell. This chain is Cell division topological specificity factor, found in Chromobacterium violaceum (strain ATCC 12472 / DSM 30191 / JCM 1249 / CCUG 213 / NBRC 12614 / NCIMB 9131 / NCTC 9757 / MK).